We begin with the raw amino-acid sequence, 241 residues long: Methylthioribulose-1-phosphate dehydratase (241 aa).

Positions 1–20 (MSAIKDERNNDHLVQSHDPE) are disordered. Cys-100 provides a ligand contact to substrate. His-117 and His-119 together coordinate Zn(2+). Glu-146 (proton donor/acceptor) is an active-site residue. His-202 provides a ligand contact to Zn(2+).

It belongs to the aldolase class II family. MtnB subfamily. Zn(2+) is required as a cofactor.

The protein resides in the cytoplasm. It catalyses the reaction 5-(methylsulfanyl)-D-ribulose 1-phosphate = 5-methylsulfanyl-2,3-dioxopentyl phosphate + H2O. Its pathway is amino-acid biosynthesis; L-methionine biosynthesis via salvage pathway; L-methionine from S-methyl-5-thio-alpha-D-ribose 1-phosphate: step 2/6. Functionally, catalyzes the dehydration of methylthioribulose-1-phosphate (MTRu-1-P) into 2,3-diketo-5-methylthiopentyl-1-phosphate (DK-MTP-1-P). The sequence is that of Methylthioribulose-1-phosphate dehydratase from Blastomyces gilchristii (strain SLH14081) (Blastomyces dermatitidis).